The chain runs to 365 residues: Protein RecA (365 aa).

Position 77 to 84 (77 to 84 (GPESSGKT)) interacts with ATP.

It belongs to the RecA family.

The protein localises to the cytoplasm. Functionally, can catalyze the hydrolysis of ATP in the presence of single-stranded DNA, the ATP-dependent uptake of single-stranded DNA by duplex DNA, and the ATP-dependent hybridization of homologous single-stranded DNAs. It interacts with LexA causing its activation and leading to its autocatalytic cleavage. The chain is Protein RecA from Mesorhizobium japonicum (strain LMG 29417 / CECT 9101 / MAFF 303099) (Mesorhizobium loti (strain MAFF 303099)).